Here is a 484-residue protein sequence, read N- to C-terminus: Glycogen synthase (484 aa).

ADP-alpha-D-glucose is bound at residue lysine 15.

The protein belongs to the glycosyltransferase 1 family. Bacterial/plant glycogen synthase subfamily.

The catalysed reaction is [(1-&gt;4)-alpha-D-glucosyl](n) + ADP-alpha-D-glucose = [(1-&gt;4)-alpha-D-glucosyl](n+1) + ADP + H(+). It participates in glycan biosynthesis; glycogen biosynthesis. Functionally, synthesizes alpha-1,4-glucan chains using ADP-glucose. The polypeptide is Glycogen synthase (Bacillus licheniformis (strain ATCC 14580 / DSM 13 / JCM 2505 / CCUG 7422 / NBRC 12200 / NCIMB 9375 / NCTC 10341 / NRRL NRS-1264 / Gibson 46)).